The following is a 54-amino-acid chain: Ovomucoid (54 aa).

In terms of domain architecture, Kazal-like spans 4-54 (VDCSDYPKPACLLEYMPLCGSDNKTYDNKCSFCNAVVDSNGTLSLSHFGKC). 3 disulfide bridges follow: Cys6/Cys36, Cys14/Cys33, and Cys22/Cys54. Asn43 carries an N-linked (GlcNAc...) asparagine glycan.

The protein resides in the secreted. The sequence is that of Ovomucoid from Opisthocomus hoazin (Hoatzin).